Consider the following 349-residue polypeptide: Magnesium-protoporphyrin IX monomethyl ester [oxidative] cyclase (349 aa).

The span at Met1–Ala10 shows a compositional bias: low complexity. Positions Met1 to Leu23 are disordered.

It belongs to the AcsF family. Fe cation serves as cofactor.

It carries out the reaction Mg-protoporphyrin IX 13-monomethyl ester + 3 NADPH + 3 O2 + 2 H(+) = 3,8-divinyl protochlorophyllide a + 3 NADP(+) + 5 H2O. It participates in porphyrin-containing compound metabolism; chlorophyll biosynthesis (light-independent). In terms of biological role, catalyzes the formation of the isocyclic ring in chlorophyll biosynthesis. Mediates the cyclase reaction, which results in the formation of divinylprotochlorophyllide (Pchlide) characteristic of all chlorophylls from magnesium-protoporphyrin IX 13-monomethyl ester (MgPMME). The chain is Magnesium-protoporphyrin IX monomethyl ester [oxidative] cyclase from Prochlorococcus marinus (strain MIT 9303).